The following is a 298-amino-acid chain: Phosphatidylserine decarboxylase proenzyme (298 aa).

Residues Asp113, His169, and Ser256 each act as charge relay system; for autoendoproteolytic cleavage activity in the active site. The active-site Schiff-base intermediate with substrate; via pyruvic acid; for decarboxylase activity is the Ser256. Position 256 is a pyruvic acid (Ser); by autocatalysis (Ser256).

This sequence belongs to the phosphatidylserine decarboxylase family. PSD-B subfamily. Prokaryotic type II sub-subfamily. As to quaternary structure, heterodimer of a large membrane-associated beta subunit and a small pyruvoyl-containing alpha subunit. Pyruvate serves as cofactor. Is synthesized initially as an inactive proenzyme. Formation of the active enzyme involves a self-maturation process in which the active site pyruvoyl group is generated from an internal serine residue via an autocatalytic post-translational modification. Two non-identical subunits are generated from the proenzyme in this reaction, and the pyruvate is formed at the N-terminus of the alpha chain, which is derived from the carboxyl end of the proenzyme. The autoendoproteolytic cleavage occurs by a canonical serine protease mechanism, in which the side chain hydroxyl group of the serine supplies its oxygen atom to form the C-terminus of the beta chain, while the remainder of the serine residue undergoes an oxidative deamination to produce ammonia and the pyruvoyl prosthetic group on the alpha chain. During this reaction, the Ser that is part of the protease active site of the proenzyme becomes the pyruvoyl prosthetic group, which constitutes an essential element of the active site of the mature decarboxylase.

The protein localises to the cell membrane. It catalyses the reaction a 1,2-diacyl-sn-glycero-3-phospho-L-serine + H(+) = a 1,2-diacyl-sn-glycero-3-phosphoethanolamine + CO2. It functions in the pathway phospholipid metabolism; phosphatidylethanolamine biosynthesis; phosphatidylethanolamine from CDP-diacylglycerol: step 2/2. In terms of biological role, catalyzes the formation of phosphatidylethanolamine (PtdEtn) from phosphatidylserine (PtdSer). The protein is Phosphatidylserine decarboxylase proenzyme of Desulfitobacterium hafniense (strain DSM 10664 / DCB-2).